Reading from the N-terminus, the 383-residue chain is Paralemmin-1 (383 aa).

N-acetylmethionine is present on Met-1. Positions 5-102 (ATDTASQQER…KEIDVLEFGE (98 aa)) form a coiled coil. Disordered regions lie at residues 51–163 (RERW…GSTM), 242–295 (TLSE…GQEP), and 334–375 (ATPR…MKKP). The span at 69-96 (DMRKQMQEDEQKARGLEESITRLEKEID) shows a compositional bias: basic and acidic residues. Composition is skewed to polar residues over residues 109–124 (KENS…QSAS) and 133–143 (ETLVNAQQTPL). Residues Ser-116, Ser-122, and Ser-124 each carry the phosphoserine modification. Residues Thr-141, Thr-145, and Thr-153 each carry the phosphothreonine modification. A phosphoserine mark is found at Ser-157 and Ser-161. Thr-242 carries the post-translational modification Phosphothreonine. Ser-244 is modified (phosphoserine). Basic and acidic residues predominate over residues 257–273 (GLAEDVTRTTPSRREIT). Low complexity predominate over residues 285–295 (GPPGIQPGQEP). Ser-345 carries the phosphoserine modification. Residues 357–367 (QTGPTTTPSDT) show a composition bias toward polar residues. 3 positions are modified to phosphothreonine: Thr-361, Thr-362, and Thr-363. A Phosphoserine modification is found at Ser-365. Phosphothreonine is present on Thr-367. 2 S-palmitoyl cysteine lipidation sites follow: Cys-377 and Cys-379. The residue at position 380 (Cys-380) is a Cysteine methyl ester. Cys-380 carries the S-farnesyl cysteine lipid modification. Positions 381–383 (SVM) are cleaved as a propeptide — removed in mature form.

Belongs to the paralemmin family. As to quaternary structure, interacts with dopamine receptor DRD3. Expression is highest in brain, intermediate in adrenal gland and kidney, and much lower or undetectable in other tissues. Isoform 1 is the predominant isoform in most tissues except brain and kidney where isoform 2 predominates.

Its subcellular location is the cell membrane. It localises to the cell projection. It is found in the filopodium membrane. The protein resides in the axon. The protein localises to the dendrite. Its subcellular location is the dendritic spine. It localises to the basolateral cell membrane. It is found in the apicolateral cell membrane. Involved in plasma membrane dynamics and cell process formation. Isoform 1 and isoform 2 are necessary for axonal and dendritic filopodia induction, for dendritic spine maturation and synapse formation in a palmitoylation-dependent manner. This Mus musculus (Mouse) protein is Paralemmin-1 (Palm).